The chain runs to 306 residues: Cysteine synthase (306 aa).

N6-(pyridoxal phosphate)lysine is present on Lys46. Pyridoxal 5'-phosphate contacts are provided by residues Asn76, 180 to 184 (GSGGT), and Ser267.

The protein belongs to the cysteine synthase/cystathionine beta-synthase family. In terms of assembly, homodimer. Requires pyridoxal 5'-phosphate as cofactor.

The catalysed reaction is O-acetyl-L-serine + hydrogen sulfide = L-cysteine + acetate. It functions in the pathway amino-acid biosynthesis; L-cysteine biosynthesis; L-cysteine from L-serine: step 2/2. The chain is Cysteine synthase (cysM) from Helicobacter pylori (strain ATCC 700392 / 26695) (Campylobacter pylori).